The primary structure comprises 87 residues: MAHKKAGGSSRNGRDSESKRLGVKVYGGQAINAGGIIVRQRGTRMHPGENVGMGKDHTLFALTDGHVNFSTKGAAKKHMVNVVPAAV.

The tract at residues 1 to 21 (MAHKKAGGSSRNGRDSESKRL) is disordered.

The protein belongs to the bacterial ribosomal protein bL27 family.

The polypeptide is Large ribosomal subunit protein bL27 (Paraburkholderia xenovorans (strain LB400)).